Reading from the N-terminus, the 1622-residue chain is WD repeat-containing protein 97 (1622 aa).

6 WD repeats span residues 187–233 (SEQG…RRLV), 290–329 (LHKTTISDLAYCEEVEAMVTASRDSTVKVWEADWQIRMVF), 331–370 (GHTGPVTAMTVLPNTTLVLSASQDGTLRTWDLQAAAQVGE), 552–592 (ELRC…TVFQ), 594–633 (EAHSPGPVVAIASTWNSIVSSGGDLTVKMWRVFPYAEESL), and 687–726 (DPTDHITGLCCCPTLKLYACSSLDCTVRIWTAENRLLRLL). Disordered stretches follow at residues 1090-1112 (GEKPGEEGEEDKKEEEEEKEDEE) and 1453-1472 (LHPAGPAQLPGEPPPLEETD). The stretch at 1094–1118 (GEEGEEDKKEEEEEKEDEELDWALA) forms a coiled coil. Residues 1096–1112 (EGEEDKKEEEEEKEDEE) are compositionally biased toward acidic residues.

In Homo sapiens (Human), this protein is WD repeat-containing protein 97.